A 273-amino-acid chain; its full sequence is Homeobox protein Hox-C13b (273 aa).

The segment at residues 201–260 is a DNA-binding region (homeobox); it reads GRKKRVPYTKIQLKELEKEYAASKFITKDRRRRISATTSLSERQVTIWFQNRRVKEKKFV.

This sequence belongs to the Abd-B homeobox family.

The protein resides in the nucleus. Functionally, sequence-specific transcription factor which is part of a developmental regulatory system that provides cells with specific positional identities on the anterior-posterior axis. Plays a role in early embryonic development. This chain is Homeobox protein Hox-C13b (hoxc13b), found in Danio rerio (Zebrafish).